We begin with the raw amino-acid sequence, 311 residues long: MILRRTLPRLASAKDGSGGGFADGHFPSLRGHPAARANARDAAEKQAALAAKEEEIRDHRRGDAAAASPAPSTVKEFRVYRWSPDAPSRRPHLQSYHVDLATCGPMVLDVLQKIKAEHDATLAFRRSCREGICGSCSMCIDGVNTVACLRPVDTDTSSATTVTPLPHMYVVRDLVVDLTSFYQQYKSVEPWLKRKTKTKTETTEHAQSPEERKRLDGLYECILCACCSAACPSYWWNAEAFLGPAALLHAYRWVSDSRDEYAAERVQALAEGWDKLYRCRMIKSCTATCPKSLDPAAAISAMKTLHQLGKP.

A mitochondrion-targeting transit peptide spans 1 to 63; that stretch reads MILRRTLPRL…EEIRDHRRGD (63 aa). Positions 1 to 70 are disordered; the sequence is MILRRTLPRL…RGDAAAASPA (70 aa). Residues 51–63 are compositionally biased toward basic and acidic residues; sequence AKEEEIRDHRRGD. In terms of domain architecture, 2Fe-2S ferredoxin-type spans 77-168; sequence FRVYRWSPDA…ATTVTPLPHM (92 aa). Residues Cys128, Cys133, and Cys148 each coordinate [2Fe-2S] cluster. Residues 211 to 241 enclose the 4Fe-4S ferredoxin-type domain; the sequence is ERKRLDGLYECILCACCSAACPSYWWNAEAF. [4Fe-4S] cluster contacts are provided by Cys221, Cys224, and Cys227. A [3Fe-4S] cluster-binding site is contributed by Cys231. Trp236 is an a ubiquinone binding site. Residues Cys279 and Cys285 each contribute to the [3Fe-4S] cluster site. Cys289 contributes to the [4Fe-4S] cluster binding site.

This sequence belongs to the succinate dehydrogenase/fumarate reductase iron-sulfur protein family. As to quaternary structure, component of complex II composed of eight subunits in plants: four classical SDH subunits SDH1, SDH2, SDH3 and SDH4 (a flavoprotein (FP), an iron-sulfur protein (IP), and a cytochrome b composed of a large and a small subunit.), as well as four subunits unknown in mitochondria from bacteria and heterotrophic eukaryotes. The cofactor is [2Fe-2S] cluster. It depends on [3Fe-4S] cluster as a cofactor. [4Fe-4S] cluster serves as cofactor.

The protein localises to the mitochondrion inner membrane. It carries out the reaction a quinone + succinate = fumarate + a quinol. The protein operates within carbohydrate metabolism; tricarboxylic acid cycle; fumarate from succinate (eukaryal route): step 1/1. Its function is as follows. Iron-sulfur protein (IP) subunit of succinate dehydrogenase (SDH) that is involved in complex II of the mitochondrial electron transport chain and is responsible for transferring electrons from succinate to ubiquinone (coenzyme Q). In Oryza sativa subsp. japonica (Rice), this protein is Succinate dehydrogenase [ubiquinone] iron-sulfur subunit 2, mitochondrial.